A 458-amino-acid chain; its full sequence is Hepatocyte nuclear factor 3-beta (458 aa).

The interval 14 to 93 (DWSSYYAEPE…AGAMAGMSGS (80 aa)) is transactivation domain 1. The Nuclear localization signal signature appears at 106–113 (LSPSLSPL). Residue threonine 156 is modified to Phosphothreonine; by PKB/AKT1. The fork-head DNA-binding region spans 159–252 (KPPYSYISLI…ENGCYLRRQK (94 aa)). Residues serine 212 and serine 283 each carry the phosphoserine modification. The disordered stretch occupies residues 286–365 (QLGEAAGSAS…PGLPPEAHLK (80 aa)). Polar residues predominate over residues 294 to 310 (ASETPAGTESPHSSASP). Threonine 301 bears the Phosphothreonine mark. 4 positions are modified to phosphoserine: serine 303, serine 306, serine 307, and serine 309. A compositionally biased stretch (low complexity) spans 339–352 (PGQQQQAAAHLLGP). The interval 361-458 (EAHLKPEHHY…VYSRPIMNSS (98 aa)) is transactivation domain 2. A phosphoserine mark is found at serine 437 and serine 458.

In terms of assembly, binds DNA as a monomer. Binds TLE1. Interacts with FOXA1 and FOXA3. Interacts with PRKDC. Interacts with AKT1. Interacts with TET1; this interaction may recruit TET1 to specific genomic loci to mediate their demethylation. Phosphorylation on Thr-156 abolishes binding to target promoters and subsequent transcription activation upon insulin stimulation. Liver.

It localises to the nucleus. Its subcellular location is the cytoplasm. Functionally, transcription factor that is involved in embryonic development, establishment of tissue-specific gene expression and regulation of gene expression in differentiated tissues. Is thought to act as a 'pioneer' factor opening the compacted chromatin for other proteins through interactions with nucleosomal core histones and thereby replacing linker histones at target enhancer and/or promoter sites. Binds DNA with the consensus sequence 5'-[AC]A[AT]T[AG]TT[GT][AG][CT]T[CT]-3'. In embryonic development is required for notochord formation. Involved in the development of multiple endoderm-derived organ systems such as the liver, pancreas and lungs; FOXA1 and FOXA2 seem to have at least in part redundant roles. Originally described as a transcription activator for a number of liver genes such as AFP, albumin, tyrosine aminotransferase, PEPCK, etc. Interacts with the cis-acting regulatory regions of these genes. Involved in glucose homeostasis; regulates the expression of genes important for glucose sensing in pancreatic beta-cells and glucose homeostasis. Involved in regulation of fat metabolism. Acts synergistically with ONECUT1 to activate transcription of female-specific CYP2C12; the function is inhibited by growth hormone-activated STAT5B. Acts synergistically with HNF4A to activate transcription of APOA1. This is Hepatocyte nuclear factor 3-beta (Foxa2) from Rattus norvegicus (Rat).